Here is a 919-residue protein sequence, read N- to C-terminus: MLX-interacting protein (919 aa).

The interval 1–72 (MAADVFMCSP…AGPGREEPPR (72 aa)) is disordered. Alanine 2 is modified (N-acetylalanine). A phosphoserine mark is found at serine 9, serine 27, serine 33, and serine 39. Over residues 27 to 37 (SEDDDDSDTDE) the composition is skewed to acidic residues. Residues 44–56 (SGAATPARAHASA) are compositionally biased toward low complexity. Residues 73-327 (RQQIIHSGHF…PLQPNLDFMD (255 aa)) form a required for cytoplasmic localization region. The segment at 322–445 (NLDFMDTFEP…LLSPSPAPPP (124 aa)) is transactivation domain. 2 disordered regions span residues 542–562 (KPVSLTGGRPKQPHKIVPAPK) and 633–712 (DLGH…SDPK). At serine 669 the chain carries Phosphoserine. Residues 670–685 (PQVTVTGPSRDCPNSG) show a composition bias toward polar residues. Low complexity predominate over residues 686–706 (QASPCASEQSPSPQSPQNNCS). Residues 719–769 (NRQMKHISAEQKRRFNIKMCFDMLNSLISNNSKLTSHAITLQKTVEYITKL) form the bHLH domain. Positions 769–790 (LQQERGQMQEEARRLREEIEEL) are leucine-zipper. The tract at residues 832–881 (WKFWIFSIIIKPLFESFKGMVSTSSLEELHRTALSWLDQHCSLPILRPMV) is mediates heterotypic interactions between MLXIP and MLX and is required for cytoplasmic localization.

As to quaternary structure, efficient DNA binding requires dimerization with another bHLH protein. Binds DNA as a homodimer or a heterodimer with MLX. Widely expressed in adult tissues. Most abundant in skeletal muscle.

Its subcellular location is the cytoplasm. The protein localises to the nucleus. The protein resides in the mitochondrion outer membrane. Its function is as follows. Binds DNA as a heterodimer with MLX and activates transcription. Binds to the canonical E box sequence 5'-CACGTG-3'. Plays a role in transcriptional activation of glycolytic target genes. Involved in glucose-responsive gene regulation. The polypeptide is MLX-interacting protein (Homo sapiens (Human)).